A 260-amino-acid chain; its full sequence is Protein PET122, mitochondrial (260 aa).

The N-terminal 8 residues, 1–8, are a transit peptide targeting the mitochondrion; the sequence is MLSITRRL.

The protein localises to the mitochondrion inner membrane. Its function is as follows. Required for expression of the mitochondrial gene for cytochrome c oxidase subunit 3 (COX3). PET122 seems to work by directly interacting with the small ribosomal subunit to promote translation initiation on the COX3 mRNA. The protein is Protein PET122, mitochondrial (PET122) of Saccharomyces bayanus (Yeast).